Here is a 352-residue protein sequence, read N- to C-terminus: Ion-translocating oxidoreductase complex subunit D (352 aa).

A run of 5 helical transmembrane segments spans residues 20–40 (IMLL…RFFG), 42–62 (GTLV…ALVL), 78–109 (ALLT…VIIA), 123–143 (PAMI…TSWL), and 148–168 (IAVN…GHTA). Thr-187 is subject to FMN phosphoryl threonine. A run of 4 helical transmembrane segments spans residues 214 to 234 (ILAG…GVWL), 242 to 262 (WHIP…GWLF), 267 to 287 (LAAP…FFIL), and 301 to 318 (LMFG…RSFG).

This sequence belongs to the NqrB/RnfD family. The complex is composed of six subunits: RsxA, RsxB, RsxC, RsxD, RsxE and RsxG. It depends on FMN as a cofactor.

It localises to the cell inner membrane. In terms of biological role, part of a membrane-bound complex that couples electron transfer with translocation of ions across the membrane. Required to maintain the reduced state of SoxR. This chain is Ion-translocating oxidoreductase complex subunit D, found in Shigella flexneri.